The sequence spans 186 residues: Elongation factor P (186 aa).

This sequence belongs to the elongation factor P family.

It is found in the cytoplasm. It participates in protein biosynthesis; polypeptide chain elongation. In terms of biological role, involved in peptide bond synthesis. Stimulates efficient translation and peptide-bond synthesis on native or reconstituted 70S ribosomes in vitro. Probably functions indirectly by altering the affinity of the ribosome for aminoacyl-tRNA, thus increasing their reactivity as acceptors for peptidyl transferase. The polypeptide is Elongation factor P (Polynucleobacter asymbioticus (strain DSM 18221 / CIP 109841 / QLW-P1DMWA-1) (Polynucleobacter necessarius subsp. asymbioticus)).